The following is a 323-amino-acid chain: Breast cancer metastasis-suppressor 1-like protein-A (323 aa).

The segment covering 1-15 has biased composition (basic and acidic residues); it reads MPVHSREKKESNHEE. The tract at residues 1–52 is disordered; that stretch reads MPVHSREKKESNHEEMEVDFAEQEGSSSEDEDTESSSVSEDGESSEMDDEDC. Residues 16-51 show a composition bias toward acidic residues; that stretch reads MEVDFAEQEGSSSEDEDTESSSVSEDGESSEMDDED. 2 coiled-coil regions span residues 50 to 81 and 156 to 178; these read EDCE…YKER and QTEL…ITSE.

It belongs to the BRMS1 family.

The protein localises to the nucleus. Its function is as follows. Involved in the histone deacetylase (HDAC1)-dependent transcriptional repression activity. This is Breast cancer metastasis-suppressor 1-like protein-A (brms1la) from Danio rerio (Zebrafish).